An 840-amino-acid chain; its full sequence is Translation initiation factor IF-2 (840 aa).

Residues 95 to 143 show a composition bias toward basic and acidic residues; the sequence is RSPDEIEAERQRELEEQRAAEEAERLKAEEAAARQRAEEEARKAEEAAR. Disordered regions lie at residues 95–155 and 172–256; these read RSPD…ATAG and KPAA…PTGP. Residues 144–155 are compositionally biased toward low complexity; the sequence is AKAAQEAAATAG. 2 stretches are compositionally biased toward basic and acidic residues: residues 175-191 and 223-232; these read AVEE…PKRD and STDEESDGYR. A compositionally biased stretch (basic residues) spans 233-247; the sequence is RGGRGGKSKLKKRNQ. A tr-type G domain is found at 340–509; sequence TRAPVVTVMG…LLQAEVLELK (170 aa). Residues 349-356 are G1; the sequence is GHVDHGKT. 349-356 contacts GTP; it reads GHVDHGKT. The segment at 374–378 is G2; it reads GITQH. Residues 395 to 398 form a G3 region; the sequence is DTPG. Residues 395–399 and 449–452 contribute to the GTP site; these read DTPGH and NKID. The interval 449–452 is G4; that stretch reads NKID. The G5 stretch occupies residues 485-487; that stretch reads SAK.

It belongs to the TRAFAC class translation factor GTPase superfamily. Classic translation factor GTPase family. IF-2 subfamily.

The protein resides in the cytoplasm. Its function is as follows. One of the essential components for the initiation of protein synthesis. Protects formylmethionyl-tRNA from spontaneous hydrolysis and promotes its binding to the 30S ribosomal subunits. Also involved in the hydrolysis of GTP during the formation of the 70S ribosomal complex. The protein is Translation initiation factor IF-2 of Pseudomonas aeruginosa (strain LESB58).